Consider the following 127-residue polypeptide: Large ribosomal subunit protein eL32 (127 aa).

The segment covering 38–48 has biased composition (basic and acidic residues); that stretch reads WRRPKGIDSKM. The tract at residues 38–66 is disordered; that stretch reads WRRPKGIDSKMRLKKKGKPRSPSIGWSSP.

It belongs to the eukaryotic ribosomal protein eL32 family.

In Thermococcus gammatolerans (strain DSM 15229 / JCM 11827 / EJ3), this protein is Large ribosomal subunit protein eL32.